Consider the following 466-residue polypeptide: Histidinol dehydrogenase, chloroplastic (466 aa).

Residues 1–30 (MSLNLSRLSLLSSPRISISTHAPRKGYVCC) constitute a chloroplast transit peptide. Tyr155, Gln217, and Asn240 together coordinate NAD(+). Positions 266, 288, and 291 each coordinate substrate. Residues Gln288 and His291 each contribute to the Zn(2+) site. Residues Glu356 and His357 each act as proton acceptor in the active site. The substrate site is built by His357, Asp390, Glu444, and His449. Zn(2+) is bound at residue Asp390. His449 lines the Zn(2+) pocket.

This sequence belongs to the histidinol dehydrogenase family. It depends on Zn(2+) as a cofactor.

The protein localises to the plastid. The protein resides in the chloroplast. The catalysed reaction is L-histidinol + 2 NAD(+) + H2O = L-histidine + 2 NADH + 3 H(+). Its pathway is amino-acid biosynthesis; L-histidine biosynthesis; L-histidine from 5-phospho-alpha-D-ribose 1-diphosphate: step 9/9. Its function is as follows. Catalyzes the sequential NAD-dependent oxidations of L-histidinol to L-histidinaldehyde and then to L-histidine. This Arabidopsis thaliana (Mouse-ear cress) protein is Histidinol dehydrogenase, chloroplastic (HISN8).